Here is a 201-residue protein sequence, read N- to C-terminus: Putative 3-methyladenine DNA glycosylase (201 aa).

It belongs to the DNA glycosylase MPG family.

In Clostridium novyi (strain NT), this protein is Putative 3-methyladenine DNA glycosylase.